The sequence spans 1293 residues: Phosphoribosylformylglycinamidine synthase (1293 aa).

ATP contacts are provided by residues Gly305–Asp316 and Ala676. Mg(2+) is bound by residues Asp677, Glu716, Asn720, and Asp884. Residue Ser886 coordinates ATP. Residues Met1040–Gly1293 form the Glutamine amidotransferase type-1 domain. Cys1133 acts as the Nucleophile in catalysis. Catalysis depends on residues His1258 and Glu1260.

It in the N-terminal section; belongs to the FGAMS family. As to quaternary structure, monomer.

Its subcellular location is the cytoplasm. The catalysed reaction is N(2)-formyl-N(1)-(5-phospho-beta-D-ribosyl)glycinamide + L-glutamine + ATP + H2O = 2-formamido-N(1)-(5-O-phospho-beta-D-ribosyl)acetamidine + L-glutamate + ADP + phosphate + H(+). Its pathway is purine metabolism; IMP biosynthesis via de novo pathway; 5-amino-1-(5-phospho-D-ribosyl)imidazole from N(2)-formyl-N(1)-(5-phospho-D-ribosyl)glycinamide: step 1/2. In terms of biological role, phosphoribosylformylglycinamidine synthase involved in the purines biosynthetic pathway. Catalyzes the ATP-dependent conversion of formylglycinamide ribonucleotide (FGAR) and glutamine to yield formylglycinamidine ribonucleotide (FGAM) and glutamate. The chain is Phosphoribosylformylglycinamidine synthase from Shewanella denitrificans (strain OS217 / ATCC BAA-1090 / DSM 15013).